We begin with the raw amino-acid sequence, 103 residues long: Isocitrate dehydrogenase [NAD] subunit beta, mitochondrial (103 aa).

The protein belongs to the isocitrate and isopropylmalate dehydrogenases family. In terms of assembly, heterooligomer of subunits alpha (IDH3A), beta (IDH3B), and gamma (IDH3G) in the apparent ratio of 2:1:1. The heterodimer containing one IDH3A and one IDH3B subunit and the heterodimer containing one IDH3A and one IDH3G subunit assemble into a heterotetramer (which contains two subunits of IDH3A, one of IDH3B and one of IDH3G) and further into the heterooctamer.

The protein localises to the mitochondrion. With respect to regulation, the heterotetramer and the heterodimer composed of IDH3A and IDH3G subunits can be allosterically activated by citrate (CIT) or/and ADP, and the two activators can act independently or synergistically. The heterodimer composed of IDH3A and IDH3B subunits cannot be allosterically regulated and the allosteric regulation of the heterotetramer is through the IDH3G subunit and not the IDH3B subunit. The IDH3G subunit contains the allosteric site which consists of a CIT-binding site and an ADP-binding site, and the binding of CIT and ADP causes conformational changes at the allosteric site which are transmitted to the active site in the catalytic subunit (IDH3A) through a cascade of conformational changes at the heterodimer interface, leading to stabilization of the isocitrate-binding at the active site and thus activation of the enzyme. ATP can activate the heterotetramer and the heterodimer composed of IDH3A and IDH3G subunits at low concentrations but inhibits their activities at high concentrations, whereas ATP exhibits only inhibitory effect on the heterodimer composed of IDH3A and IDH3B subunits. Functionally, plays a structural role to facilitate the assembly and ensure the full activity of the enzyme catalyzing the decarboxylation of isocitrate (ICT) into alpha-ketoglutarate. The heterodimer composed of the alpha (IDH3A) and beta (IDH3B) subunits and the heterodimer composed of the alpha (IDH3A) and gamma (IDH3G) subunits, have considerable basal activity but the full activity of the heterotetramer (containing two subunits of IDH3A, one of IDH3B and one of IDH3G) requires the assembly and cooperative function of both heterodimers. This chain is Isocitrate dehydrogenase [NAD] subunit beta, mitochondrial (IDH3B), found in Sus scrofa (Pig).